The primary structure comprises 370 residues: Peridinin-chlorophyll a-binding protein 1, chloroplastic (370 aa).

Residues Met1–Ala57 constitute a chloroplast transit peptide. 2 tandem repeats follow at residues Asp58–Gly220 and Asp221–Arg370.

As to quaternary structure, homotrimer.

Its subcellular location is the plastid. The protein resides in the chloroplast. Water-soluble antenna for capture of solar energy in the blue-green range. Peridinin is an asymmetric carotenoid. This Amphidinium carterae (Dinoflagellate) protein is Peridinin-chlorophyll a-binding protein 1, chloroplastic.